A 391-amino-acid polypeptide reads, in one-letter code: Elongation factor Tu (391 aa).

Positions 10 to 201 (KPHVNIGTIG…AVDDYIPTPE (192 aa)) constitute a tr-type G domain. The segment at 19–26 (GHVDHGKT) is G1. A GTP-binding site is contributed by 19-26 (GHVDHGKT). Thr26 lines the Mg(2+) pocket. The segment at 55 to 59 (GITIS) is G2. The G3 stretch occupies residues 76-79 (DCPG). GTP-binding positions include 76–80 (DCPGH) and 131–134 (NKCD). The interval 131–134 (NKCD) is G4. A G5 region spans residues 169–171 (SAL).

Belongs to the TRAFAC class translation factor GTPase superfamily. Classic translation factor GTPase family. EF-Tu/EF-1A subfamily. As to quaternary structure, monomer.

It localises to the cytoplasm. The enzyme catalyses GTP + H2O = GDP + phosphate + H(+). Functionally, GTP hydrolase that promotes the GTP-dependent binding of aminoacyl-tRNA to the A-site of ribosomes during protein biosynthesis. This is Elongation factor Tu from Brucella anthropi (strain ATCC 49188 / DSM 6882 / CCUG 24695 / JCM 21032 / LMG 3331 / NBRC 15819 / NCTC 12168 / Alc 37) (Ochrobactrum anthropi).